We begin with the raw amino-acid sequence, 429 residues long: Forkhead box protein A1-A (429 aa).

A DNA-binding region (fork-head) is located at residues 159-253 (KPPYSYISLI…ENGCYLRRQK (95 aa)). Positions 258 to 274 (EKTQGGKGNQDGRKDHS) are enriched in basic and acidic residues. The disordered stretch occupies residues 258-341 (EKTQGGKGNQ…HSTHSLAHES (84 aa)). A compositionally biased stretch (low complexity) spans 287–304 (SSQMDSSSSMSNPSSSPQ). Residues 325–336 (PLSSHQNHSTHS) show a composition bias toward polar residues.

As to expression, at neurula stage, expressed in the notochord but not in the neural floor plate. During tailbud stages, expressed in the neural floor plate. At stage 35, expressed in the rhombencephalon, mesencephalon, pharyngeal pouches, foregut and pronephros. At stage 44, expressed in a region of the gut on the right hand side of the embryo. Expressed in the adult lung and liver.

The protein resides in the nucleus. In terms of biological role, probable transcription factor. The polypeptide is Forkhead box protein A1-A (foxa1-a) (Xenopus laevis (African clawed frog)).